A 294-amino-acid chain; its full sequence is F-box protein SKIP3 (294 aa).

The F-box domain maps to S21–F67.

As to quaternary structure, part of a SCF (SKP1-cullin-F-box) protein ligase complex. Interacts with SKP1A/ASK1.

It functions in the pathway protein modification; protein ubiquitination. The protein is F-box protein SKIP3 (SKIP3) of Arabidopsis thaliana (Mouse-ear cress).